Consider the following 103-residue polypeptide: MTIMLEAYLTLAAVLFCIGVWGLINSRNAVRVLMSIELMLNAVNINLMAFSNYLDGELIRGQVFAIFVITVAAAEAAVGLAILLSLYRNRQTVDMERFNLLRW.

Transmembrane regions (helical) follow at residues I3–L23, V32–N52, and V63–L83.

The protein belongs to the complex I subunit 4L family. As to quaternary structure, NDH is composed of at least 16 different subunits, 5 of which are encoded in the nucleus.

It is found in the plastid. It localises to the organellar chromatophore thylakoid membrane. The enzyme catalyses a plastoquinone + NADH + (n+1) H(+)(in) = a plastoquinol + NAD(+) + n H(+)(out). The catalysed reaction is a plastoquinone + NADPH + (n+1) H(+)(in) = a plastoquinol + NADP(+) + n H(+)(out). Functionally, NDH shuttles electrons from NAD(P)H:plastoquinone, via FMN and iron-sulfur (Fe-S) centers, to quinones in the photosynthetic chain and possibly in a chloroplast respiratory chain. The immediate electron acceptor for the enzyme in this species is believed to be plastoquinone. Couples the redox reaction to proton translocation, and thus conserves the redox energy in a proton gradient. This is NAD(P)H-quinone oxidoreductase subunit 4L, organellar chromatophore from Paulinella chromatophora.